A 218-amino-acid polypeptide reads, in one-letter code: LexA repressor (218 aa).

A DNA-binding region (H-T-H motif) is located at residues 31–51 (IREIQDGLRISSTSVVAYNLR). Catalysis depends on for autocatalytic cleavage activity residues S137 and K176.

This sequence belongs to the peptidase S24 family. As to quaternary structure, homodimer.

It carries out the reaction Hydrolysis of Ala-|-Gly bond in repressor LexA.. Represses a number of genes involved in the response to DNA damage (SOS response), including recA and lexA. In the presence of single-stranded DNA, RecA interacts with LexA causing an autocatalytic cleavage which disrupts the DNA-binding part of LexA, leading to derepression of the SOS regulon and eventually DNA repair. The chain is LexA repressor from Roseiflexus sp. (strain RS-1).